Here is a 223-residue protein sequence, read N- to C-terminus: Urease accessory protein UreF (223 aa).

Belongs to the UreF family. UreD, UreF and UreG form a complex that acts as a GTP-hydrolysis-dependent molecular chaperone, activating the urease apoprotein by helping to assemble the nickel containing metallocenter of UreC. The UreE protein probably delivers the nickel.

It is found in the cytoplasm. Required for maturation of urease via the functional incorporation of the urease nickel metallocenter. The protein is Urease accessory protein UreF of Paenarthrobacter aurescens (strain TC1).